The sequence spans 53 residues: MNQGKIWTVVNPAVGLPLLLGSVAITALLVHLAVLTHTTWFPAFTQGGLKKAA.

Residues 1–14 (MNQGKIWTVVNPAV) lie on the Cytoplasmic side of the membrane. Residues 15-35 (GLPLLLGSVAITALLVHLAVL) traverse the membrane as a helical segment. A bacteriochlorophyll is bound at residue H31. At 36 to 53 (THTTWFPAFTQGGLKKAA) the chain is on the periplasmic side.

Belongs to the antenna complex alpha subunit family. The core complex is formed by different alpha and beta chains, binding bacteriochlorophyll molecules, and arranged most probably in tetrameric structures disposed around the reaction center. The non-pigmented gamma chains may constitute additional components.

It localises to the cell inner membrane. Its function is as follows. Antenna complexes are light-harvesting systems, which transfer the excitation energy to the reaction centers. The sequence is that of Light-harvesting protein B-800/820 alpha chain from Rhodoblastus acidophilus (Rhodopseudomonas acidophila).